Here is a 254-residue protein sequence, read N- to C-terminus: UstYa family oxidase phomYc' (254 aa).

A helical transmembrane segment spans residues 38–58; it reads LVLVLQSVLIISLLASLHILG. Residue asparagine 64 is glycosylated (N-linked (GlcNAc...) asparagine). Residues 138–142 carry the HXXHC 1 motif; it reads HQLHC. Asparagine 159 carries an N-linked (GlcNAc...) asparagine glycan. The short motif at 173-177 is the HXXHC 2 element; it reads HIDHC.

This sequence belongs to the ustYa family.

Its subcellular location is the membrane. It functions in the pathway mycotoxin biosynthesis. Functionally, ustYa family oxidase; part of the gene cluster that mediates the biosynthesis of the phomopsins, a group of hexapeptide mycotoxins which infects lupins and causes lupinosis disease in livestock. Within the pathway, phomYc' catalyzes the desaturation of the Ile moiety into 2,3-dehydroisoleucine (dIle). The pathway starts with the processing of the precursor phomA' by several endopeptidases including kexin proteases as well as the cluster-specific S41 family peptidase phomP1 and the oligopeptidase phomG' to produce 10 identical copies of the hexapeptide Tyr-Val-Ile-Pro-Ile-Asp. After being excised from the precursor peptide, the core peptides are cyclized and modified post-translationally by enzymes encoded within the gene cluster. The timing and order of proteolysis of the phomA' precursor and PTMs are still unknown. Two tyrosinase-like enzymes, phomQ1' and phomQ2, catalyze the chlorination and hydroxylation of Tyr, respectively. PhomYb, is proposed to be involved in the construction of the macrocyclic structure. The other 4 ustYa family proteins may be involved in PTMs that generate the unique structure of phomopsin A. PhomYa' is required for the hydroxylation of C-beta of Tyr. PhomYc', phomYd', and phomYe are responsible for the biosynthesis of 2,3-dehydroisoleucine (dIle), 2,3-dehydroaspartic acid (dAsp), and 3,4-dehydroproline (dPro), respectively. While dIle formation by phomYc' is indispensable for the installation of dAsp by phomYd', the order of the other PTMs have not been elucidated yet. Most of the biosynthetic enzymes likely have broad substrate specificity, and thus, there might be a metabolic grid from a precursor to phomopsin A. The enzyme(s) responsible for the biosynthesis of 3,4-dehydrovaline (dVal) have also not been identified yet. Finally, phomM' acts as an S-adenosylmethionine-dependent alpha-N-methyltransferase that catalyzes two successive N-methylation reactions, converting N-desmethyl-phomopsin A to phomopsin A and phomopsin A further to an N,N-dimethylated congener called phomopsin E. The chain is UstYa family oxidase phomYc' from Diaporthe leptostromiformis (Lupinosis disease fungus).